The chain runs to 288 residues: CUF1-dependent copper transporter 1 (288 aa).

N-linked (GlcNAc...) asparagine glycosylation occurs at asparagine 18. The chain crosses the membrane as a helical span at residues 42-62 (MPSSAGATVGVCIGLFILAIF). Disordered regions lie at residues 106–125 (PVLFNRRSSTKKEKDVYNPL) and 154–180 (RESQEGSSAPSYAHSQQGQAQAQGSGV). Positions 158–167 (EGSSAPSYAH) are enriched in polar residues. Positions 168-177 (SQQGQAQAQG) are enriched in low complexity. A helical membrane pass occupies residues 251-271 (LLMLVVMTFNIWWMISVVIGC).

Belongs to the copper transporter (Ctr) (TC 1.A.56) family. SLC31A subfamily. As to quaternary structure, interacts with the copper acquisition factor BIM1.

It localises to the cell membrane. Its function is as follows. High affinity copper transporter involved in Cu(+) import into the cell upon copper-limitating conditions. Functions with BIM1 and probably also FRE4 and FRE7, where FRE4 and FRE7 metalloreductases liberate the Cu(2+) bound to the BIM1 copper-binding site for subsequent import of Cu(+) into the cell by CTR1, via the reduction of BIM1-bound Cu(2+) to Cu(+) to reduce binding affinity for BIM1 but increase affinity for CTR1. The BIM1-CTR1 pathway for copper uptake plays a key role in colonization in the brain where copper amounts are low and thus in cryptococcal meningitis. This chain is CUF1-dependent copper transporter 1, found in Cryptococcus neoformans var. grubii serotype A (strain H99 / ATCC 208821 / CBS 10515 / FGSC 9487) (Filobasidiella neoformans var. grubii).